The following is a 351-amino-acid chain: Biotin synthase (351 aa).

Residues 44–262 (NRVQVSTLLS…LAVARIMMPK (219 aa)) enclose the Radical SAM core domain. [4Fe-4S] cluster-binding residues include C59, C63, and C66. [2Fe-2S] cluster-binding residues include C103, C134, C194, and R266.

It belongs to the radical SAM superfamily. Biotin synthase family. As to quaternary structure, homodimer. It depends on [4Fe-4S] cluster as a cofactor. [2Fe-2S] cluster serves as cofactor.

The enzyme catalyses (4R,5S)-dethiobiotin + (sulfur carrier)-SH + 2 reduced [2Fe-2S]-[ferredoxin] + 2 S-adenosyl-L-methionine = (sulfur carrier)-H + biotin + 2 5'-deoxyadenosine + 2 L-methionine + 2 oxidized [2Fe-2S]-[ferredoxin]. It functions in the pathway cofactor biosynthesis; biotin biosynthesis; biotin from 7,8-diaminononanoate: step 2/2. Catalyzes the conversion of dethiobiotin (DTB) to biotin by the insertion of a sulfur atom into dethiobiotin via a radical-based mechanism. This Stutzerimonas stutzeri (strain A1501) (Pseudomonas stutzeri) protein is Biotin synthase.